Consider the following 120-residue polypeptide: Non-specific lipid-transfer protein (120 aa).

The first 26 residues, methionine 1–glycine 26, serve as a signal peptide directing secretion. Disulfide bonds link cysteine 40/cysteine 56, cysteine 57/cysteine 102, and cysteine 77/cysteine 116.

Belongs to the plant LTP family.

Functionally, plant non-specific lipid-transfer proteins transfer phospholipids as well as galactolipids across membranes. May play a role in wax or cutin deposition in the cell walls of expanding epidermal cells and certain secretory tissues. This Gossypium hirsutum (Upland cotton) protein is Non-specific lipid-transfer protein.